Consider the following 161-residue polypeptide: Ragulator complex protein LAMTOR1 (161 aa).

Residues 1 to 43 (MGCCYSSENEDSDQDREERKLLLDPSSTPTKALNGAEPNYHSL) are disordered. G2 is lipidated: N-myristoyl glycine. Residues C3 and C4 are each lipidated (S-palmitoyl cysteine). K20 is covalently cross-linked (Glycyl lysine isopeptide (Lys-Gly) (interchain with G-Cter in ubiquitin)). A Phosphoserine modification is found at S27. Position 28 is a phosphothreonine (T28). K31 is covalently cross-linked (Glycyl lysine isopeptide (Lys-Gly) (interchain with G-Cter in ubiquitin)). S42 and S56 each carry phosphoserine. A Glycyl lysine isopeptide (Lys-Gly) (interchain with G-Cter in ubiquitin) cross-link involves residue K60. Position 98 is a phosphoserine (S98). Glycyl lysine isopeptide (Lys-Gly) (interchain with G-Cter in ubiquitin) cross-links involve residues K103 and K104. Positions 121 to 161 (SEPIPFSDLQQVSRIAAYAYSALSQIRVDAKEELVVQFGIP) are interaction with LAMTOR2 and LAMTOR3. S141 carries the post-translational modification Phosphoserine.

It belongs to the LAMTOR1 family. In terms of assembly, part of the Ragulator complex composed of LAMTOR1, LAMTOR2, LAMTOR3, LAMTOR4 and LAMTOR5. LAMTOR4 and LAMTOR5 form a heterodimer that interacts, through LAMTOR1, with a LAMTOR2, LAMTOR3 heterodimer. Interacts with LAMTOR2 and LAMTOR3; the interaction is direct. The Ragulator complex interacts with both the mTORC1 complex and heterodimers constituted of the Rag GTPases RagA/RRAGA, RagB/RRAGB, RagC/RRAGC and RagD/RRAGD; regulated by amino acid availability. The Ragulator complex interacts with SLC38A9; the probable amino acid sensor. Component of the lysosomal folliculin complex (LFC), composed of FLCN, FNIP1 (or FNIP2), RagA/RRAGA or RagB/RRAGB GDP-bound, RagC/RRAGC or RagD/RRAGD GTP-bound, and Ragulator. Associates with the lysosomal V-ATPase complex; interaction promotes the guanine nucleotide exchange factor (GEF) of the Ragulator complex. Interacts with MMP14. Interacts with CDKN1B; prevents the interaction of CDKN1B with RHOA leaving RHOA in a form accessible to activation by ARHGEF2. Interacts with PIP4P1. Post-translationally, N-terminal myristoylation and palmitoylation mediates its recruitment to lysosome membranes, thereby promoting localization of the Ragulator complex to lysosomes. N-myristoylation by NMT1 is required for palmitoylation at Cys-3 and Cys-4. Ubiquitinated at Lys-60, Lys-103 and Lys-104 by UBE3A in neurons, promoting its degradation by the proteasome, thereby limiting mTORC1 signaling and activity-dependent synaptic remodeling. Ubiquitination at Lys-20 impairs the association with the lysosomal V-ATPase complex. Deubiquitination at Lys-20 by USP32 promotes the association with the lysosomal V-ATPase complex and subsequent activation of the mTORC1 complex.

Its subcellular location is the lysosome membrane. The protein localises to the late endosome membrane. Functionally, key component of the Ragulator complex, a multiprotein complex involved in amino acid sensing and activation of mTORC1, a signaling complex promoting cell growth in response to growth factors, energy levels, and amino acids. Activated by amino acids through a mechanism involving the lysosomal V-ATPase, the Ragulator plays a dual role for the small GTPases Rag (RagA/RRAGA, RagB/RRAGB, RagC/RRAGC and/or RagD/RRAGD): it (1) acts as a guanine nucleotide exchange factor (GEF), activating the small GTPases Rag and (2) mediates recruitment of Rag GTPases to the lysosome membrane. Activated Ragulator and Rag GTPases function as a scaffold recruiting mTORC1 to lysosomes where it is in turn activated. LAMTOR1 is directly responsible for anchoring the Ragulator complex to the lysosomal membrane. LAMTOR1 wraps around the other subunits of the Ragulator complex to hold them in place and interacts with the Rag GTPases, thereby playing a key role in the recruitment of the mTORC1 complex to lysosomes. Also involved in the control of embryonic stem cells differentiation via non-canonical RagC/RRAGC and RagD/RRAGD activation: together with FLCN, it is necessary to recruit and activate RagC/RRAGC and RagD/RRAGD at the lysosomes, and to induce exit of embryonic stem cells from pluripotency via non-canonical, mTOR-independent TFE3 inactivation. Also required for late endosomes/lysosomes biogenesis it may regulate both the recycling of receptors through endosomes and the MAPK signaling pathway through recruitment of some of its components to late endosomes. May be involved in cholesterol homeostasis regulating LDL uptake and cholesterol release from late endosomes/lysosomes. May also play a role in RHOA activation. This is Ragulator complex protein LAMTOR1 from Mus musculus (Mouse).